A 96-amino-acid polypeptide reads, in one-letter code: MMRRLAVLVLAVAMVAACGGGVVGVAGASCNAGQLTVCAGAIAGGARPTAACCSSLRAQQGCFCQFAKDPRYGRYVNSPNARKAVSSCGIALPTCH.

Positions 1 to 27 are cleaved as a signal peptide; that stretch reads MMRRLAVLVLAVAMVAACGGGVVGVAG. 4 cysteine pairs are disulfide-bonded: C30–C62, C38–C52, C53–C88, and C64–C95.

The protein belongs to the plant LTP family. B11E subfamily.

Its function is as follows. Transfer lipids across membranes. May play a role in plant defense or in the biosynthesis of cuticle layers. In Oryza sativa subsp. indica (Rice), this protein is Non-specific lipid-transfer protein 2 (LTP-2).